A 1441-amino-acid polypeptide reads, in one-letter code: Probable ubiquitin-conjugating enzyme E2 R521 (1441 aa).

The helical transmembrane segment at 20-40 (YIHHIIINYITNSILYFFLIM) threads the bilayer. Residues 63-89 (NQSKLVNTLDIIKDEINKWEEKNTDKD) adopt a coiled-coil conformation. A compositionally biased stretch (basic and acidic residues) spans 180-199 (VSKDKMKDKSESNSEHEQES). 2 disordered regions span residues 180 to 207 (VSKD…SNEI) and 283 to 305 (IFGK…MSKV). Residues 286 to 303 (KSKNSGPSSSKTSISSMS) are compositionally biased toward low complexity. Positions 340-368 (TTNEDNNDLDNLINEVERLVQETKDQETK) form a coiled coil. Positions 505–538 (TVEPVQEVAEEPVQQEVAEEPVQQEVAEEPVQQE) are enriched in low complexity. Disordered stretches follow at residues 505–554 (TVEP…PVQK) and 577–605 (NDFS…NNLG). Positions 539–549 (VAEEPVQEVAE) are enriched in acidic residues. Residues 1217–1380 (AISRELLSHS…VRFNCMKWAM (164 aa)) form the UBC core domain. Cys1306 functions as the Glycyl thioester intermediate in the catalytic mechanism.

The protein belongs to the ubiquitin-conjugating enzyme family.

It localises to the membrane. It carries out the reaction S-ubiquitinyl-[E1 ubiquitin-activating enzyme]-L-cysteine + [E2 ubiquitin-conjugating enzyme]-L-cysteine = [E1 ubiquitin-activating enzyme]-L-cysteine + S-ubiquitinyl-[E2 ubiquitin-conjugating enzyme]-L-cysteine.. Its pathway is protein modification; protein ubiquitination. Functionally, catalyzes the covalent attachment of ubiquitin to other proteins. This chain is Probable ubiquitin-conjugating enzyme E2 R521, found in Acanthamoeba polyphaga (Amoeba).